Consider the following 169-residue polypeptide: Probable prefoldin subunit 3 (169 aa).

It belongs to the prefoldin subunit alpha family. Heterohexamer of two PFD-alpha type and four PFD-beta type subunits.

Functionally, binds specifically to cytosolic chaperonin (c-CPN) and transfers target proteins to it. Binds to nascent polypeptide chain and promotes folding in an environment in which there are many competing pathways for nonnative proteins. The sequence is that of Probable prefoldin subunit 3 from Schizosaccharomyces pombe (strain 972 / ATCC 24843) (Fission yeast).